The following is a 195-amino-acid chain: Probable DNA-directed RNA polymerase subunit delta (195 aa).

Residues 14–81 enclose the HTH HARE-type domain; it reads FALVEIATAI…GNNEWALRAW (68 aa). 2 stretches are compositionally biased toward acidic residues: residues 120-172 and 181-195; these read DDDV…DESI and GGDD…DQEK. The interval 120 to 195 is disordered; it reads DDDVIDYNDD…DDLSDGDQEK (76 aa).

Belongs to the RpoE family. As to quaternary structure, RNAP is composed of a core of 2 alpha, a beta and a beta' subunits. The core is associated with a delta subunit and one of several sigma factors.

Its function is as follows. Participates in both the initiation and recycling phases of transcription. In the presence of the delta subunit, RNAP displays an increased specificity of transcription, a decreased affinity for nucleic acids, and an increased efficiency of RNA synthesis because of enhanced recycling. The chain is Probable DNA-directed RNA polymerase subunit delta from Leuconostoc mesenteroides subsp. mesenteroides (strain ATCC 8293 / DSM 20343 / BCRC 11652 / CCM 1803 / JCM 6124 / NCDO 523 / NBRC 100496 / NCIMB 8023 / NCTC 12954 / NRRL B-1118 / 37Y).